The following is a 321-amino-acid chain: Homoserine O-acetyltransferase (321 aa).

Catalysis depends on Cys-142, which acts as the Acyl-thioester intermediate. Lys-163 and Ser-192 together coordinate substrate. The active-site Proton acceptor is the His-235. The active site involves Glu-237. Substrate is bound at residue Arg-249.

The protein belongs to the MetA family.

The protein resides in the cytoplasm. The catalysed reaction is L-homoserine + acetyl-CoA = O-acetyl-L-homoserine + CoA. It participates in amino-acid biosynthesis; L-methionine biosynthesis via de novo pathway; O-acetyl-L-homoserine from L-homoserine: step 1/1. Transfers an acetyl group from acetyl-CoA to L-homoserine, forming acetyl-L-homoserine. The chain is Homoserine O-acetyltransferase from Lactococcus lactis subsp. lactis (strain IL1403) (Streptococcus lactis).